We begin with the raw amino-acid sequence, 341 residues long: tRNA N6-adenosine threonylcarbamoyltransferase (341 aa).

2 residues coordinate Fe cation: His111 and His115. Substrate-binding positions include 134-138 (LVSGG), Asp167, Gly180, and Asn272. Asp300 serves as a coordination point for Fe cation.

The protein belongs to the KAE1 / TsaD family. The cofactor is Fe(2+).

It is found in the cytoplasm. It catalyses the reaction L-threonylcarbamoyladenylate + adenosine(37) in tRNA = N(6)-L-threonylcarbamoyladenosine(37) in tRNA + AMP + H(+). Required for the formation of a threonylcarbamoyl group on adenosine at position 37 (t(6)A37) in tRNAs that read codons beginning with adenine. Is involved in the transfer of the threonylcarbamoyl moiety of threonylcarbamoyl-AMP (TC-AMP) to the N6 group of A37, together with TsaE and TsaB. TsaD likely plays a direct catalytic role in this reaction. This Psychromonas ingrahamii (strain DSM 17664 / CCUG 51855 / 37) protein is tRNA N6-adenosine threonylcarbamoyltransferase.